The sequence spans 74 residues: MTVEKIEAQLTNLEMQLTFQEDTIDSLNKLVTEQTQQMSEMQKQIRWLGKRLKQMQENQSTDSDPADEPPPPHY.

Positions 52-74 (LKQMQENQSTDSDPADEPPPPHY) are disordered.

It belongs to the SlyX family.

The chain is Protein SlyX homolog from Idiomarina loihiensis (strain ATCC BAA-735 / DSM 15497 / L2-TR).